Here is a 217-residue protein sequence, read N- to C-terminus: Cytidylate kinase (217 aa).

Residue 10–18 participates in ATP binding; the sequence is GPAGAGKST.

The protein belongs to the cytidylate kinase family. Type 1 subfamily.

It localises to the cytoplasm. It carries out the reaction CMP + ATP = CDP + ADP. The enzyme catalyses dCMP + ATP = dCDP + ADP. This Clostridium botulinum (strain ATCC 19397 / Type A) protein is Cytidylate kinase.